Here is a 413-residue protein sequence, read N- to C-terminus: Arginine biosynthesis bifunctional protein ArgJ (413 aa).

The substrate site is built by threonine 163, lysine 189, threonine 200, glutamate 286, asparagine 408, and threonine 413. Residue threonine 200 is the Nucleophile of the active site.

This sequence belongs to the ArgJ family. As to quaternary structure, heterotetramer of two alpha and two beta chains.

It is found in the cytoplasm. The enzyme catalyses N(2)-acetyl-L-ornithine + L-glutamate = N-acetyl-L-glutamate + L-ornithine. The catalysed reaction is L-glutamate + acetyl-CoA = N-acetyl-L-glutamate + CoA + H(+). It functions in the pathway amino-acid biosynthesis; L-arginine biosynthesis; L-ornithine and N-acetyl-L-glutamate from L-glutamate and N(2)-acetyl-L-ornithine (cyclic): step 1/1. Its pathway is amino-acid biosynthesis; L-arginine biosynthesis; N(2)-acetyl-L-ornithine from L-glutamate: step 1/4. Its function is as follows. Catalyzes two activities which are involved in the cyclic version of arginine biosynthesis: the synthesis of N-acetylglutamate from glutamate and acetyl-CoA as the acetyl donor, and of ornithine by transacetylation between N(2)-acetylornithine and glutamate. The sequence is that of Arginine biosynthesis bifunctional protein ArgJ from Staphylococcus aureus (strain Mu50 / ATCC 700699).